Reading from the N-terminus, the 867-residue chain is Alanine--tRNA ligase (867 aa).

Zn(2+) is bound by residues His-554, His-558, Cys-656, and His-660.

It belongs to the class-II aminoacyl-tRNA synthetase family. It depends on Zn(2+) as a cofactor.

It is found in the cytoplasm. It carries out the reaction tRNA(Ala) + L-alanine + ATP = L-alanyl-tRNA(Ala) + AMP + diphosphate. Its function is as follows. Catalyzes the attachment of alanine to tRNA(Ala) in a two-step reaction: alanine is first activated by ATP to form Ala-AMP and then transferred to the acceptor end of tRNA(Ala). Also edits incorrectly charged Ser-tRNA(Ala) and Gly-tRNA(Ala) via its editing domain. This chain is Alanine--tRNA ligase, found in Methylococcus capsulatus (strain ATCC 33009 / NCIMB 11132 / Bath).